Here is an 82-residue protein sequence, read N- to C-terminus: T-complex protein 1 subunit gamma (82 aa).

G15 contacts ADP. G15 provides a ligand contact to ATP. D66 provides a ligand contact to Mg(2+). The ADP site is built by G67, T68, T69, and S70. Residues G67, T68, and T69 each coordinate ATP.

This sequence belongs to the TCP-1 chaperonin family. Component of the chaperonin-containing T-complex (TRiC), a hexadecamer composed of two identical back-to-back stacked rings enclosing a protein folding chamber. Each ring is made up of eight different subunits: TCP1/CCT1, CCT2, CCT3, CCT4, CCT5, CCT6A/CCT6, CCT7, CCT8. Interacts with PACRG. Interacts with DNAAF4. Interacts with DLEC1.

Its subcellular location is the cytoplasm. It carries out the reaction ATP + H2O = ADP + phosphate + H(+). In terms of biological role, component of the chaperonin-containing T-complex (TRiC), a molecular chaperone complex that assists the folding of actin, tubulin and other proteins upon ATP hydrolysis. The TRiC complex mediates the folding of WRAP53/TCAB1, thereby regulating telomere maintenance. As part of the TRiC complex may play a role in the assembly of BBSome, a complex involved in ciliogenesis regulating transports vesicles to the cilia. This Sus scrofa (Pig) protein is T-complex protein 1 subunit gamma (CCT3).